We begin with the raw amino-acid sequence, 129 residues long: D-ribose pyranase (129 aa).

His20 serves as the catalytic Proton donor. Substrate-binding positions include Asp28, His96, and 118–120 (YAN).

It belongs to the RbsD / FucU family. RbsD subfamily. As to quaternary structure, homodecamer.

The protein localises to the cytoplasm. The enzyme catalyses beta-D-ribopyranose = beta-D-ribofuranose. It functions in the pathway carbohydrate metabolism; D-ribose degradation; D-ribose 5-phosphate from beta-D-ribopyranose: step 1/2. Catalyzes the interconversion of beta-pyran and beta-furan forms of D-ribose. The sequence is that of D-ribose pyranase from Staphylococcus saprophyticus subsp. saprophyticus (strain ATCC 15305 / DSM 20229 / NCIMB 8711 / NCTC 7292 / S-41).